The chain runs to 928 residues: DNA polymerase I (928 aa).

The region spanning 1–323 (MVQIPENPLI…IDESPSEPAA (323 aa)) is the 5'-3' exonuclease domain. The 3'-5' exonuclease domain maps to 324–517 (ALSYENYVTI…LHLKMWPELQ (194 aa)). The klenow fragment stretch occupies residues 324 to 928 (ALSYENYVTI…GSGENWDQAH (605 aa)). The tract at residues 521-928 (GPLNVFENIE…GSGENWDQAH (408 aa)) is polymerase.

This sequence belongs to the DNA polymerase type-A family. In terms of assembly, single-chain monomer with multiple functions.

The enzyme catalyses DNA(n) + a 2'-deoxyribonucleoside 5'-triphosphate = DNA(n+1) + diphosphate. Functionally, in addition to polymerase activity, this DNA polymerase exhibits 3'-5' and 5'-3' exonuclease activity. It is able to utilize nicked circular duplex DNA as a template and can unwind the parental DNA strand from its template. The chain is DNA polymerase I (polA) from Salmonella typhimurium (strain LT2 / SGSC1412 / ATCC 700720).